We begin with the raw amino-acid sequence, 630 residues long: Golgi apyrase (630 aa).

Over 1–500 (MLIENTNDRF…RKQSSSLSNK (500 aa)) the chain is Lumenal. Glu152 serves as the catalytic Proton acceptor. Residues 501–517 (GFLMWFAIICCIFYLIF) form a helical membrane-spanning segment. At 518 to 630 (HRSHIIRRRF…SKFKDSRLYD (113 aa)) the chain is on the cytoplasmic side. Positions 586-606 (SSATMQREHEPQRTASQSANL) are disordered.

This sequence belongs to the GDA1/CD39 NTPase family. Interacts with activator subunit VMA13 of vacuolar H(+)-ATPase. Interacts with CDC55; this interaction is disrupted by adenovirus E4orf4, which remains associated with both YND1 and CDC55. It depends on Ca(2+) as a cofactor. Requires Mg(2+) as cofactor. Mn(2+) serves as cofactor.

It localises to the golgi apparatus. The protein resides in the membrane. It carries out the reaction a ribonucleoside 5'-triphosphate + 2 H2O = a ribonucleoside 5'-phosphate + 2 phosphate + 2 H(+). It functions in the pathway protein modification; protein glycosylation. With respect to regulation, activity is inhibited both by interaction with VMA13 and by V-ATPase acidification of the lumen. The activity of VMA13 is not required for YND1 inhibition. In terms of biological role, catalyzes the hydrolysis of phosphoanhydride bonds of nucleoside tri- and di-phosphates. Has equal high activity toward ADP/ATP, GDP/GTP, and UDP/UTP and approximately 50% less toward CDP/CTP and thiamine pyrophosphate. Has no activity toward GMP. Required for Golgi glycosylation and cell wall integrity. Together with CDC55, required for adenovirus E4orf4 (early region 4 open reading frame 4) induced toxicity, the apyrase activity is not required for this function. Plays a role in sphingolipid synthesis. In Saccharomyces cerevisiae (strain ATCC 204508 / S288c) (Baker's yeast), this protein is Golgi apyrase (YND1).